Consider the following 317-residue polypeptide: Zinc transporter ZIP3 (317 aa).

At 1-3 the chain is on the extracellular side; it reads MTK. Residues 4 to 24 form a helical membrane-spanning segment; sequence LLVAKVLCMVGVFFFMLLGSL. Residues 25–42 lie on the Cytoplasmic side of the membrane; the sequence is LPVKVIEADLEKAHRSKK. Residues 43-63 form a helical membrane-spanning segment; that stretch reads VLSLCNTFGGGVFLATCFNAL. At 64 to 85 the chain is on the extracellular side; the sequence is LPAVRDKLQQVLSLGHISTDYP. A helical membrane pass occupies residues 86-106; sequence LAETLMMVGFFLTVFVEQLVL. The Cytoplasmic portion of the chain corresponds to 107 to 172; it reads TFRRERPPFI…RELGRPGPLR (66 aa). A phosphoserine mark is found at Ser-125 and Ser-129. A helical membrane pass occupies residues 173–193; that stretch reads LLSLVFALSAHSVFEGLALGL. Residues 194 to 199 lie on the Extracellular side of the membrane; the sequence is QEEGER. The helical transmembrane segment at 200–220 threads the bilayer; sequence VVSLFVGVAIHETLVAVALGI. Residues 221–232 lie on the Cytoplasmic side of the membrane; the sequence is SMARSAVPLRDA. Residues 233 to 253 form a helical membrane-spanning segment; that stretch reads AKLAVTVSAMIPVGIGLGLGI. Residues 254 to 265 are Extracellular-facing; sequence ESARSVASSVAS. A helical membrane pass occupies residues 266–286; it reads ALLQGLAGGTFLFVTFLEILA. The Cytoplasmic portion of the chain corresponds to 287–294; the sequence is KELEERSE. The chain crosses the membrane as a helical span at residues 295 to 315; sequence QLLKVLFLVLGYAVLAGMVFL. The Extracellular portion of the chain corresponds to 316–317; it reads KW.

This sequence belongs to the ZIP transporter (TC 2.A.5) family. Highly expressed in the testes. Highly expressed in dentate gyrus granule cells of the hippocampus. Expressed in the mammary gland.

It is found in the cell membrane. The protein resides in the apical cell membrane. The catalysed reaction is Zn(2+)(in) = Zn(2+)(out). Functionally, transporter for the divalent cation Zn(2+). Mediates the influx of Zn(2+) into cells from extracellular space. Controls Zn(2+) accumulation into dentate gyrus granule cells in the hippocampus. Mediates Zn(2+) reuptake from the secreted milk within the alveolar lumen. The polypeptide is Zinc transporter ZIP3 (Slc39a3) (Mus musculus (Mouse)).